The chain runs to 911 residues: Eukaryotic translation initiation factor 3 subunit C (911 aa).

Disordered stretches follow at residues 1–38 and 155–181; these read MSRF…DDEE and SRFR…GEAA. The span at 11 to 20 shows a compositional bias: acidic residues; it reads SESESSEEEV. The span at 23-32 shows a compositional bias: polar residues; that stretch reads PNFNKASAFQ. Ser-34, Ser-165, Ser-175, and Ser-184 each carry phosphoserine. The span at 162–171 shows a compositional bias: acidic residues; it reads DQESEAEDEE. Low complexity predominate over residues 196-208; it reads APKIAKSAPAKSV. The segment at 196–284 is disordered; it reads APKIAKSAPA…KRAEDDEDGE (89 aa). Residues 210–236 show a composition bias toward acidic residues; it reads ADDEDSDDSIDWDSDSESETESSEDEN. Basic and acidic residues predominate over residues 241 to 271; that stretch reads MRERFLKRSTEKGEDKGDDDKRKDKRKEQKL. One can recognise a PCI domain in the interval 642–818; it reads FHMHINLELL…ETVVMHRSEP (177 aa). The tract at residues 851-911 is disordered; the sequence is FQRGNMGNRG…QQQVQTIDEE (61 aa). Basic residues predominate over residues 885-896; the sequence is QRNRNQRGHHKN. Positions 897 to 911 are enriched in low complexity; that stretch reads QQQQQQQQVQTIDEE.

It belongs to the eIF-3 subunit C family. Component of the eukaryotic translation initiation factor 3 (eIF-3) complex. The eIF-3 complex interacts with pix.

The protein resides in the cytoplasm. Component of the eukaryotic translation initiation factor 3 (eIF-3) complex, which is involved in protein synthesis of a specialized repertoire of mRNAs and, together with other initiation factors, stimulates binding of mRNA and methionyl-tRNAi to the 40S ribosome. The eIF-3 complex specifically targets and initiates translation of a subset of mRNAs involved in cell proliferation. The polypeptide is Eukaryotic translation initiation factor 3 subunit C (Drosophila pseudoobscura pseudoobscura (Fruit fly)).